Here is a 147-residue protein sequence, read N- to C-terminus: MEQTYVMVKPDGVERGLIGEIVAKIEKKGIKLVAGKLMQIDRTLAEQHYAEHIGKPFFEDLIGFITSGPVFAMVLEGDDVIKTARRMMGKTNPLEADPGTIRAEYAIHTNRNVIHGSDSPESAKREIQLFFEPHEILSYEKAVDTWI.

Lys9, Phe57, Arg85, Thr91, Arg102, and Asn112 together coordinate ATP. Catalysis depends on His115, which acts as the Pros-phosphohistidine intermediate.

The protein belongs to the NDK family. Homotetramer. It depends on Mg(2+) as a cofactor.

Its subcellular location is the cytoplasm. The catalysed reaction is a 2'-deoxyribonucleoside 5'-diphosphate + ATP = a 2'-deoxyribonucleoside 5'-triphosphate + ADP. It carries out the reaction a ribonucleoside 5'-diphosphate + ATP = a ribonucleoside 5'-triphosphate + ADP. In terms of biological role, major role in the synthesis of nucleoside triphosphates other than ATP. The ATP gamma phosphate is transferred to the NDP beta phosphate via a ping-pong mechanism, using a phosphorylated active-site intermediate. This chain is Nucleoside diphosphate kinase, found in Listeria innocua serovar 6a (strain ATCC BAA-680 / CLIP 11262).